A 41-amino-acid chain; its full sequence is Photosystem I reaction center subunit IX (41 aa).

The chain crosses the membrane as a helical span at residues 7 to 27 (YLSTAPVITAIWLGITAGILI).

The protein belongs to the PsaJ family.

The protein localises to the cellular thylakoid membrane. In terms of biological role, may help in the organization of the PsaE and PsaF subunits. The protein is Photosystem I reaction center subunit IX of Cyanothece sp. (strain PCC 7425 / ATCC 29141).